A 66-amino-acid chain; its full sequence is U10-theraphotoxin-Cg1a 1 (66 aa).

Positions 1-21 (MKTSVLFVIFGLALLFCLSFA) are cleaved as a signal peptide. Residues 22–29 (AELEDTGR) constitute a propeptide that is removed on maturation. 3 cysteine pairs are disulfide-bonded: cysteine 31/cysteine 46, cysteine 38/cysteine 51, and cysteine 45/cysteine 58.

It belongs to the neurotoxin 10 (Hwtx-1) family. 29 (Jztx-13) subfamily. In terms of tissue distribution, expressed by the venom gland.

The protein localises to the secreted. In terms of biological role, probable ion channel inhibitor. This chain is U10-theraphotoxin-Cg1a 1, found in Chilobrachys guangxiensis (Chinese earth tiger tarantula).